The primary structure comprises 100 residues: Small ribosomal subunit protein uS14c (100 aa).

Belongs to the universal ribosomal protein uS14 family. Part of the 30S ribosomal subunit.

It is found in the plastid. Its subcellular location is the chloroplast. Functionally, binds 16S rRNA, required for the assembly of 30S particles. The polypeptide is Small ribosomal subunit protein uS14c (Helianthus annuus (Common sunflower)).